The following is a 364-amino-acid chain: Tyrosine--tRNA ligase (364 aa).

Tyr39 contacts L-tyrosine. Positions 49 and 52 each coordinate ATP. L-tyrosine contacts are provided by Tyr165, Gln169, Asp172, and Gln187. The short motif at 238-242 is the 'KMSKS' region element; sequence KMSKS. Residue Lys241 coordinates ATP.

This sequence belongs to the class-I aminoacyl-tRNA synthetase family. TyrS type 4 subfamily. Homodimer.

It is found in the cytoplasm. It carries out the reaction tRNA(Tyr) + L-tyrosine + ATP = L-tyrosyl-tRNA(Tyr) + AMP + diphosphate + H(+). Its function is as follows. Catalyzes the attachment of tyrosine to tRNA(Tyr) in a two-step reaction: tyrosine is first activated by ATP to form Tyr-AMP and then transferred to the acceptor end of tRNA(Tyr). The sequence is that of Tyrosine--tRNA ligase from Aeropyrum pernix (strain ATCC 700893 / DSM 11879 / JCM 9820 / NBRC 100138 / K1).